The chain runs to 361 residues: MTITQMISEILMHNTVYNYILSLISIILFIVIGKYANALIERLADKLHKKSGIELDELLIRALSLPVAIAIILSGFYFGVNFLYLLPSLKTAVNEGILTAFILCVVVFFDRFLNELVERYLALTISKKTKKDVDDQIVVLTKKLVRLVVWVVGLLLILSNLGYDIKTLLAGLGIGGLAVALASQNLVSNLIAGLIILTDKPFKIGNWITFSGGSGIVEDIGIRSTKIRATDNSIIVVPNSKLIDEIIQNVPSKNKWKVSTTIGVTYNTPVEKIRKAEEIIKNILLEHPNVEDEPITVYFKEFGDWSLNIQVVYYIKNSRYNGYQKYISTINEVNLKIKEEFDRKGIEFAFPTYTLYLKRDD.

5 helical membrane passes run 20-40, 65-85, 89-109, 137-157, and 177-197; these read ILSLISIILFIVIGKYANALI, LPVAIAIILSGFYFGVNFLYL, LKTAVNEGILTAFILCVVVFF, IVVLTKKLVRLVVWVVGLLLI, and LAVALASQNLVSNLIAGLIIL.

The protein belongs to the MscS (TC 1.A.23) family.

The protein localises to the cell membrane. Large-conductance mechanosensitive channel that opens in response to stretch forces in the membrane lipid bilayer. Selective for cations. Rectifies with voltage. The protein is Large-conductance mechanosensitive channel MscMJLR of Methanocaldococcus jannaschii (strain ATCC 43067 / DSM 2661 / JAL-1 / JCM 10045 / NBRC 100440) (Methanococcus jannaschii).